A 332-amino-acid chain; its full sequence is UPF0194 membrane protein YbhG (332 aa).

Positions M1–A16 are cleaved as a signal peptide. A coiled-coil region spans residues E108–A209.

It belongs to the UPF0194 family.

The protein localises to the periplasm. The protein is UPF0194 membrane protein YbhG of Escherichia coli O45:K1 (strain S88 / ExPEC).